Reading from the N-terminus, the 95-residue chain is UPF0132 membrane protein AF_0736 (95 aa).

3 consecutive transmembrane segments (helical) span residues 2-22, 32-52, and 55-75; these read CYTL…SPFV, TFST…GALL, and VVMA…SRGE.

The protein belongs to the UPF0132 family.

It is found in the cell membrane. This is UPF0132 membrane protein AF_0736 from Archaeoglobus fulgidus (strain ATCC 49558 / DSM 4304 / JCM 9628 / NBRC 100126 / VC-16).